A 259-amino-acid chain; its full sequence is tRNA (guanine-N(7)-)-methyltransferase (259 aa).

Residues 1-11 show a composition bias toward basic and acidic residues; it reads MSNTDNSDKNT. The interval 1–29 is disordered; that stretch reads MSNTDNSDKNTKPTGYRPPQTDFNTEFGN. Residues Glu-89, Glu-114, Asp-141, and Asp-164 each coordinate S-adenosyl-L-methionine. Asp-164 is a catalytic residue. Substrate is bound by residues Lys-168, Asp-200, and 238 to 241; that span reads TKFE.

Belongs to the class I-like SAM-binding methyltransferase superfamily. TrmB family.

It catalyses the reaction guanosine(46) in tRNA + S-adenosyl-L-methionine = N(7)-methylguanosine(46) in tRNA + S-adenosyl-L-homocysteine. It participates in tRNA modification; N(7)-methylguanine-tRNA biosynthesis. Catalyzes the formation of N(7)-methylguanine at position 46 (m7G46) in tRNA. This is tRNA (guanine-N(7)-)-methyltransferase from Corynebacterium diphtheriae (strain ATCC 700971 / NCTC 13129 / Biotype gravis).